A 400-amino-acid polypeptide reads, in one-letter code: uncharacterized protein (400 aa).

G36–T43 lines the ATP pocket.

Belongs to the archaeal ATPase family.

This is an uncharacterized protein from Methanocaldococcus jannaschii (strain ATCC 43067 / DSM 2661 / JAL-1 / JCM 10045 / NBRC 100440) (Methanococcus jannaschii).